Consider the following 77-residue polypeptide: Sec-independent protein translocase protein TatA (77 aa).

A helical transmembrane segment spans residues 1–21; it reads MGSFSIWHWLVVLAIVVLVFG. The disordered stretch occupies residues 40–77; the sequence is KEGMKGAEEENTQPPPSHQQVTGHSIKSEIEEKDQTKV. Residues 65 to 77 show a composition bias toward basic and acidic residues; the sequence is IKSEIEEKDQTKV.

This sequence belongs to the TatA/E family. As to quaternary structure, the Tat system comprises two distinct complexes: a TatABC complex, containing multiple copies of TatA, TatB and TatC subunits, and a separate TatA complex, containing only TatA subunits. Substrates initially bind to the TatABC complex, which probably triggers association of the separate TatA complex to form the active translocon.

The protein localises to the cell inner membrane. Functionally, part of the twin-arginine translocation (Tat) system that transports large folded proteins containing a characteristic twin-arginine motif in their signal peptide across membranes. TatA could form the protein-conducting channel of the Tat system. The sequence is that of Sec-independent protein translocase protein TatA from Nitrosomonas eutropha (strain DSM 101675 / C91 / Nm57).